We begin with the raw amino-acid sequence, 291 residues long: Succinate--CoA ligase [ADP-forming] subunit alpha 1 (291 aa).

CoA is bound by residues 20 to 23 (TGFQ), Lys46, and 99 to 101 (VTE). A substrate-binding site is contributed by Tyr162. The active-site Tele-phosphohistidine intermediate is His249.

This sequence belongs to the succinate/malate CoA ligase alpha subunit family. Heterotetramer of two alpha and two beta subunits.

It catalyses the reaction succinate + ATP + CoA = succinyl-CoA + ADP + phosphate. The catalysed reaction is GTP + succinate + CoA = succinyl-CoA + GDP + phosphate. It participates in carbohydrate metabolism; tricarboxylic acid cycle; succinate from succinyl-CoA (ligase route): step 1/1. Its function is as follows. Succinyl-CoA synthetase functions in the citric acid cycle (TCA), coupling the hydrolysis of succinyl-CoA to the synthesis of either ATP or GTP and thus represents the only step of substrate-level phosphorylation in the TCA. The alpha subunit of the enzyme binds the substrates coenzyme A and phosphate, while succinate binding and nucleotide specificity is provided by the beta subunit. The sequence is that of Succinate--CoA ligase [ADP-forming] subunit alpha 1 from Archaeoglobus fulgidus (strain ATCC 49558 / DSM 4304 / JCM 9628 / NBRC 100126 / VC-16).